The primary structure comprises 236 residues: Purine nucleoside phosphorylase DeoD-type 2 (236 aa).

His-5 is an a purine D-ribonucleoside binding site. Phosphate contacts are provided by residues Gly-21, Arg-25, Arg-44, and 88-91 (RIGS). A purine D-ribonucleoside contacts are provided by residues 180–182 (DME) and 204–205 (SD). Asp-205 serves as the catalytic Proton donor.

This sequence belongs to the PNP/UDP phosphorylase family. In terms of assembly, homohexamer; trimer of homodimers.

The enzyme catalyses a purine D-ribonucleoside + phosphate = a purine nucleobase + alpha-D-ribose 1-phosphate. It catalyses the reaction a purine 2'-deoxy-D-ribonucleoside + phosphate = a purine nucleobase + 2-deoxy-alpha-D-ribose 1-phosphate. In terms of biological role, catalyzes the reversible phosphorolytic breakdown of the N-glycosidic bond in the beta-(deoxy)ribonucleoside molecules, with the formation of the corresponding free purine bases and pentose-1-phosphate. The polypeptide is Purine nucleoside phosphorylase DeoD-type 2 (Vibrio cholerae serotype O1 (strain ATCC 39315 / El Tor Inaba N16961)).